We begin with the raw amino-acid sequence, 137 residues long: Large ribosomal subunit protein uL16c (137 aa).

Over residues methionine 1–methionine 17 the composition is skewed to basic residues. Residues methionine 1–serine 21 are disordered.

This sequence belongs to the universal ribosomal protein uL16 family. In terms of assembly, part of the 50S ribosomal subunit.

The protein resides in the plastid. This Cuscuta obtusiflora (Peruvian dodder) protein is Large ribosomal subunit protein uL16c.